The sequence spans 276 residues: NADPH-dependent 7-cyano-7-deazaguanine reductase (276 aa).

I83 to S85 lines the substrate pocket. S85–K86 is an NADPH binding site. C184 acts as the Thioimide intermediate in catalysis. The active-site Proton donor is D191. H223–E224 contributes to the substrate binding site. NADPH is bound at residue R252–G253.

It belongs to the GTP cyclohydrolase I family. QueF type 2 subfamily. In terms of assembly, homodimer.

It is found in the cytoplasm. The enzyme catalyses 7-aminomethyl-7-carbaguanine + 2 NADP(+) = 7-cyano-7-deazaguanine + 2 NADPH + 3 H(+). The protein operates within tRNA modification; tRNA-queuosine biosynthesis. Functionally, catalyzes the NADPH-dependent reduction of 7-cyano-7-deazaguanine (preQ0) to 7-aminomethyl-7-deazaguanine (preQ1). The sequence is that of NADPH-dependent 7-cyano-7-deazaguanine reductase from Desulfotalea psychrophila (strain LSv54 / DSM 12343).